Here is a 309-residue protein sequence, read N- to C-terminus: Ribose-phosphate pyrophosphokinase (309 aa).

ATP is bound by residues 37–39 and 96–97; these read DGE and RQ. His130 and Asp169 together coordinate Mg(2+). The active site involves Lys192. D-ribose 5-phosphate-binding positions include Arg194, Asp218, and 222–226; that span reads DTAGT.

It belongs to the ribose-phosphate pyrophosphokinase family. Class I subfamily. As to quaternary structure, homohexamer. Mg(2+) serves as cofactor.

The protein localises to the cytoplasm. The catalysed reaction is D-ribose 5-phosphate + ATP = 5-phospho-alpha-D-ribose 1-diphosphate + AMP + H(+). Its pathway is metabolic intermediate biosynthesis; 5-phospho-alpha-D-ribose 1-diphosphate biosynthesis; 5-phospho-alpha-D-ribose 1-diphosphate from D-ribose 5-phosphate (route I): step 1/1. Its function is as follows. Involved in the biosynthesis of the central metabolite phospho-alpha-D-ribosyl-1-pyrophosphate (PRPP) via the transfer of pyrophosphoryl group from ATP to 1-hydroxyl of ribose-5-phosphate (Rib-5-P). This Helicobacter hepaticus (strain ATCC 51449 / 3B1) protein is Ribose-phosphate pyrophosphokinase.